The following is a 197-amino-acid chain: Stanniocalcin-2 (197 aa).

A disordered region spans residues 1 to 20; sequence TDAXNPPEGPQDRGSQQKGR.

It belongs to the stanniocalcin family. Homodimer; disulfide-linked.

Its subcellular location is the secreted. In terms of biological role, has an anti-hypocalcemic action on calcium and phosphate homeostasis. This chain is Stanniocalcin-2 (STC2), found in Cavia porcellus (Guinea pig).